We begin with the raw amino-acid sequence, 507 residues long: ATP synthase subunit alpha, plastid (507 aa).

ATP is bound at residue 170–177; that stretch reads GDRQTGKT.

Belongs to the ATPase alpha/beta chains family. As to quaternary structure, F-type ATPases have 2 components, CF(1) - the catalytic core - and CF(0) - the membrane proton channel. CF(1) has five subunits: alpha(3), beta(3), gamma(1), delta(1), epsilon(1). CF(0) has four main subunits: a, b, b' and c.

Its subcellular location is the plastid membrane. It carries out the reaction ATP + H2O + 4 H(+)(in) = ADP + phosphate + 5 H(+)(out). Functionally, produces ATP from ADP in the presence of a proton gradient across the membrane. The alpha chain is a regulatory subunit. This Aneura mirabilis (Parasitic liverwort) protein is ATP synthase subunit alpha, plastid.